We begin with the raw amino-acid sequence, 228 residues long: Ribonuclease 3 (228 aa).

The 123-residue stretch at 8–130 (LKRLERRVDY…IIGAAFLDSD (123 aa)) folds into the RNase III domain. Glu-43 serves as a coordination point for Mg(2+). The active site involves Asp-47. The Mg(2+) site is built by Asp-116 and Glu-119. The active site involves Glu-119. A DRBM domain is found at 157 to 226 (DPKTRLQEHL…ANKMLDSLSG (70 aa)).

The protein belongs to the ribonuclease III family. Homodimer. Mg(2+) is required as a cofactor.

Its subcellular location is the cytoplasm. The enzyme catalyses Endonucleolytic cleavage to 5'-phosphomonoester.. In terms of biological role, digests double-stranded RNA. Involved in the processing of primary rRNA transcript to yield the immediate precursors to the large and small rRNAs (23S and 16S). Processes some mRNAs, and tRNAs when they are encoded in the rRNA operon. Processes pre-crRNA and tracrRNA of type II CRISPR loci if present in the organism. This is Ribonuclease 3 from Psychromonas ingrahamii (strain DSM 17664 / CCUG 51855 / 37).